Reading from the N-terminus, the 221-residue chain is MKRFLLLIILFGISFSFVSDYLLRAESLFSQLKDANAKEETPYLYGKVKGYYEAIKLYAVEYKEDRIKTLFTLMSKNTKKAVRGAYTEREPLTELITFEPRVYFEEYCDGIMDECFYEKHYEKEKFIELVDYFSLKRRVEFLRNHEGKYCAPFDFGMAEALFNAVSLELMQEKPDEKVLIALREKLEPILVMAEEKLRYAMKKELPCYRNRLSEHIGYWKP.

The first 18 residues, 1-18, serve as a signal peptide directing secretion; sequence MKRFLLLIILFGISFSFV.

This is an uncharacterized protein from Aquifex aeolicus (strain VF5).